Consider the following 750-residue polypeptide: MIIRSPEPEVKILVDRDPIKTSFEDWARPGHFSRTIAKGPDTTTWIWNLHADAHDFDSHTSDLEEISRKVFSAHFGQLSIIFLWLSGMYFHGARFSNYEAWLGDPTHIGPSAQVVWPIVGQEILNGDVGGGFRGIQITSGFFQMWRASGITNELQLYCTAIGALVFAALMLFAGWFHYHKAAPKLAWFQDVESMLNHHLAGLLGLGSLSWAGHQVHVSLPINQFLNAGVDPKEIPLPHEFILNRDLLAQLYPSFAEGATPFFTLNWSKYAEFLTFRGGLDPVTGGLWLTDIAHHHLAIAILFLIAGHMYRTNWGIGHGIKDILEAHKGPFTGQGHKGLYEILTTSWHAQLSINLAMLGSLTIIVAHHMYAMPPYPYLATDYGTQLSLFTHHMWIGGFLIVGAAAHAAIFMVRDYDPTTRYNDLLDRVLRHRDAIISHLNWVCIFLGFHSFGLYIHNDTMSALGRPQDMFSDTAIQLQPVFAQWIQNTHALAPRITAPGATTGTSLTWGGGDLVAVGGKVALLPIPLGTADFLVHHIHAFTIHVTVLILLKGVLFSRSSRLIPDKANLGFRFPCDGPGRGGTCQVSAWDHVFLGLFWMYNSISVVIFHFSWKMQSDVWGSVSDQGVVTHITGGNFAQSSITINGWLRDFLWAQASQVIQSYGSSLSAYGLFFLGAHFVWAFSLMFLFSGRGYWQELIESIVWAHNKLKVAPATQPRALSIVQGRAVGVTHYLLGGIATTWAFFLARIIAVG.

Transmembrane regions (helical) follow at residues 70-93 (VFSAHFGQLSIIFLWLSGMYFHGA), 156-179 (LYCTAIGALVFAALMLFAGWFHYH), 195-219 (LNHHLAGLLGLGSLSWAGHQVHVSL), 291-309 (IAHHHLAIAILFLIAGHMY), 346-369 (WHAQLSINLAMLGSLTIIVAHHMY), 385-411 (LSLFTHHMWIGGFLIVGAAAHAAIFMV), 433-455 (AIISHLNWVCIFLGFHSFGLYIH), and 531-549 (FLVHHIHAFTIHVTVLILL). Residues Cys573 and Cys582 each coordinate [4Fe-4S] cluster. A run of 2 helical transmembrane segments spans residues 589 to 610 (HVFLGLFWMYNSISVVIFHFSW) and 664 to 686 (LSAYGLFFLGAHFVWAFSLMFLF). His675 contacts chlorophyll a'. The chlorophyll a site is built by Met683 and Tyr691. Trp692 provides a ligand contact to phylloquinone. A helical membrane pass occupies residues 724–744 (AVGVTHYLLGGIATTWAFFLA).

It belongs to the PsaA/PsaB family. The PsaA/B heterodimer binds the P700 chlorophyll special pair and subsequent electron acceptors. PSI consists of a core antenna complex that captures photons, and an electron transfer chain that converts photonic excitation into a charge separation. The eukaryotic PSI reaction center is composed of at least 11 subunits. P700 is a chlorophyll a/chlorophyll a' dimer, A0 is one or more chlorophyll a, A1 is one or both phylloquinones and FX is a shared 4Fe-4S iron-sulfur center. serves as cofactor.

It is found in the plastid. Its subcellular location is the chloroplast thylakoid membrane. It carries out the reaction reduced [plastocyanin] + hnu + oxidized [2Fe-2S]-[ferredoxin] = oxidized [plastocyanin] + reduced [2Fe-2S]-[ferredoxin]. In terms of biological role, psaA and PsaB bind P700, the primary electron donor of photosystem I (PSI), as well as the electron acceptors A0, A1 and FX. PSI is a plastocyanin-ferredoxin oxidoreductase, converting photonic excitation into a charge separation, which transfers an electron from the donor P700 chlorophyll pair to the spectroscopically characterized acceptors A0, A1, FX, FA and FB in turn. Oxidized P700 is reduced on the lumenal side of the thylakoid membrane by plastocyanin. The sequence is that of Photosystem I P700 chlorophyll a apoprotein A1 from Cucumis sativus (Cucumber).